We begin with the raw amino-acid sequence, 370 residues long: Protein-glutamate methylesterase/protein-glutamine glutaminase 3 (370 aa).

A Response regulatory domain is found at 3-119 (KVLIVDDSAL…SLNVSRIERE (117 aa)). Asp53 is subject to 4-aspartylphosphate. Residues 166-360 (SLTEIGVVLI…GQLNAWMSRT (195 aa)) enclose the CheB-type methylesterase domain. Active-site residues include Ser178, His205, and Asp302.

The protein belongs to the CheB family. In terms of processing, phosphorylated by CheA. Phosphorylation of the N-terminal regulatory domain activates the methylesterase activity.

The protein resides in the cytoplasm. The enzyme catalyses [protein]-L-glutamate 5-O-methyl ester + H2O = L-glutamyl-[protein] + methanol + H(+). It carries out the reaction L-glutaminyl-[protein] + H2O = L-glutamyl-[protein] + NH4(+). Its function is as follows. Involved in chemotaxis. Part of a chemotaxis signal transduction system that modulates chemotaxis in response to various stimuli. Catalyzes the demethylation of specific methylglutamate residues introduced into the chemoreceptors (methyl-accepting chemotaxis proteins or MCP) by CheR. Also mediates the irreversible deamidation of specific glutamine residues to glutamic acid. The chain is Protein-glutamate methylesterase/protein-glutamine glutaminase 3 from Rhodospirillum rubrum (strain ATCC 11170 / ATH 1.1.1 / DSM 467 / LMG 4362 / NCIMB 8255 / S1).